Here is a 508-residue protein sequence, read N- to C-terminus: 2,3-bisphosphoglycerate-independent phosphoglycerate mutase (508 aa).

Mn(2+) contacts are provided by D11 and S61. S61 (phosphoserine intermediate) is an active-site residue. Substrate is bound by residues H122, 150–151 (RD), R182, R188, 257–260 (RPDR), and K332. Positions 397, 401, 438, 439, and 456 each coordinate Mn(2+).

This sequence belongs to the BPG-independent phosphoglycerate mutase family. In terms of assembly, monomer. Mn(2+) serves as cofactor.

The catalysed reaction is (2R)-2-phosphoglycerate = (2R)-3-phosphoglycerate. The protein operates within carbohydrate degradation; glycolysis; pyruvate from D-glyceraldehyde 3-phosphate: step 3/5. In terms of biological role, catalyzes the interconversion of 2-phosphoglycerate and 3-phosphoglycerate. This Mycoplasma pneumoniae (strain ATCC 29342 / M129 / Subtype 1) (Mycoplasmoides pneumoniae) protein is 2,3-bisphosphoglycerate-independent phosphoglycerate mutase.